The following is a 391-amino-acid chain: Ferrochelatase (391 aa).

Residues His-196 and Glu-281 each coordinate Fe cation.

The protein belongs to the ferrochelatase family.

The protein resides in the cytoplasm. The catalysed reaction is heme b + 2 H(+) = protoporphyrin IX + Fe(2+). Its pathway is porphyrin-containing compound metabolism; protoheme biosynthesis; protoheme from protoporphyrin-IX: step 1/1. In terms of biological role, catalyzes the ferrous insertion into protoporphyrin IX. This Prochlorococcus marinus (strain NATL2A) protein is Ferrochelatase.